Here is a 165-residue protein sequence, read N- to C-terminus: Phosphopantetheine adenylyltransferase (165 aa).

Ser-8 serves as a coordination point for substrate. ATP-binding positions include 8 to 9 (SF) and His-16. Substrate is bound by residues Lys-40, Thr-72, and Arg-86. ATP contacts are provided by residues 87-89 (GLR), Glu-97, and 122-128 (YSFLSSS).

It belongs to the bacterial CoaD family. Homohexamer. The cofactor is Mg(2+).

It localises to the cytoplasm. It carries out the reaction (R)-4'-phosphopantetheine + ATP + H(+) = 3'-dephospho-CoA + diphosphate. It participates in cofactor biosynthesis; coenzyme A biosynthesis; CoA from (R)-pantothenate: step 4/5. Functionally, reversibly transfers an adenylyl group from ATP to 4'-phosphopantetheine, yielding dephospho-CoA (dPCoA) and pyrophosphate. This is Phosphopantetheine adenylyltransferase from Synechococcus sp. (strain WH7803).